Consider the following 159-residue polypeptide: NADH-quinone oxidoreductase subunit B (159 aa).

Cysteine 37, cysteine 38, cysteine 102, and cysteine 132 together coordinate [4Fe-4S] cluster.

Belongs to the complex I 20 kDa subunit family. NDH-1 is composed of 14 different subunits. Subunits NuoB, C, D, E, F, and G constitute the peripheral sector of the complex. [4Fe-4S] cluster is required as a cofactor.

It is found in the cell inner membrane. The enzyme catalyses a quinone + NADH + 5 H(+)(in) = a quinol + NAD(+) + 4 H(+)(out). In terms of biological role, NDH-1 shuttles electrons from NADH, via FMN and iron-sulfur (Fe-S) centers, to quinones in the respiratory chain. The immediate electron acceptor for the enzyme in this species is believed to be ubiquinone. Couples the redox reaction to proton translocation (for every two electrons transferred, four hydrogen ions are translocated across the cytoplasmic membrane), and thus conserves the redox energy in a proton gradient. This Variovorax paradoxus (strain S110) protein is NADH-quinone oxidoreductase subunit B.